Consider the following 1171-residue polypeptide: Pyruvate-flavodoxin oxidoreductase (1171 aa).

2 consecutive 4Fe-4S ferredoxin-type domains span residues 682 to 711 and 736 to 767; these read EVPV…PALL and YHLA…MQSL. Residues cysteine 691, cysteine 694, cysteine 697, cysteine 701, cysteine 745, cysteine 748, cysteine 751, cysteine 755, cysteine 811, cysteine 814, cysteine 839, and cysteine 1072 each contribute to the [4Fe-4S] cluster site.

It belongs to the pyruvate:ferredoxin/flavodoxin oxidoreductase family. [4Fe-4S] cluster serves as cofactor.

It carries out the reaction oxidized [flavodoxin] + pyruvate + CoA + 2 H(+) = reduced [flavodoxin] + acetyl-CoA + CO2. Its function is as follows. Oxidoreductase required for the transfer of electrons from pyruvate to flavodoxin, which reduces nitrogenase. This chain is Pyruvate-flavodoxin oxidoreductase (nifJ), found in Klebsiella pneumoniae.